We begin with the raw amino-acid sequence, 215 residues long: Probable phosphoglycerate mutase GpmB (215 aa).

Residues 8-15, 21-22, arginine 58, 82-85, and 151-152 each bind substrate; these read RHGETVWN, QG, ELNM, and GM. Histidine 9 (tele-phosphohistidine intermediate) is an active-site residue. The active-site Proton donor/acceptor is glutamate 82.

Belongs to the phosphoglycerate mutase family. GpmB subfamily.

The enzyme catalyses (2R)-2-phosphoglycerate = (2R)-3-phosphoglycerate. It functions in the pathway carbohydrate degradation; glycolysis; pyruvate from D-glyceraldehyde 3-phosphate: step 3/5. The chain is Probable phosphoglycerate mutase GpmB from Yersinia enterocolitica serotype O:8 / biotype 1B (strain NCTC 13174 / 8081).